The chain runs to 842 residues: Glycogen phosphorylase, muscle form (842 aa).

Ser-2 carries the post-translational modification N-acetylserine. At Ser-15 the chain carries Phosphoserine; by PHK; in form phosphorylase A. Positions 43 and 76 each coordinate AMP. 2 positions are modified to phosphotyrosine: Tyr-204 and Tyr-227. An AMP-binding site is contributed by 310 to 319 (RRFKSSKFGC). A Phosphoserine modification is found at Ser-430. The residue at position 473 (Tyr-473) is a Phosphotyrosine. At Lys-681 the chain carries N6-(pyridoxal phosphate)lysine. 2 positions are modified to phosphoserine: Ser-747 and Ser-748.

This sequence belongs to the glycogen phosphorylase family. Homodimer. Homotetramer; to form the enzymatically active phosphorylase A. Requires pyridoxal 5'-phosphate as cofactor. Phosphorylation of Ser-15 converts phosphorylase B (unphosphorylated) to phosphorylase A.

The enzyme catalyses [(1-&gt;4)-alpha-D-glucosyl](n) + phosphate = [(1-&gt;4)-alpha-D-glucosyl](n-1) + alpha-D-glucose 1-phosphate. Its activity is regulated as follows. Allosterically regulated through the non-covalent binding of metabolites, being activated by AMP and inhibited by ATP, ADP, and glucose-6-phosphate. The activity is also controlled by post-translational modifications including phosphorylation. Its function is as follows. Allosteric enzyme that catalyzes the rate-limiting step in glycogen catabolism, the phosphorolytic cleavage of glycogen to produce glucose-1-phosphate, and plays a central role in maintaining cellular and organismal glucose homeostasis. This is Glycogen phosphorylase, muscle form from Bos taurus (Bovine).